The chain runs to 131 residues: MSWQAYVDDHLMCDIDGNRLTAAAILGQDGSVWSQSATFPAFKPEEIAAILKDLDQPGTLAPTGLFLGGTKYMVIQGEAGAVIRGKKGSGGITVKKTNQALIIGIYDEPLTPGQCNMIVERLGDYLIEQGL.

Belongs to the profilin family. As to quaternary structure, occurs in many kinds of cells as a complex with monomeric actin in a 1:1 ratio.

It is found in the cytoplasm. Its subcellular location is the cytoskeleton. Its function is as follows. Binds to actin and affects the structure of the cytoskeleton. At high concentrations, profilin prevents the polymerization of actin, whereas it enhances it at low concentrations. By binding to PIP2, it inhibits the formation of IP3 and DG. The chain is Profilin from Prunus avium (Cherry).